The primary structure comprises 547 residues: Cdc42-interacting protein 4 (547 aa).

Residues 1–117 (MDWGTELWDQ…EMKQERKMHF (117 aa)) are required for translocation to the plasma membrane in response to insulin, podosome formation and interaction with AKAP9 and microtubules. Residues 1 to 264 (MDWGTELWDQ…AAESVDAKND (264 aa)) enclose the F-BAR domain. Residues 67 to 259 (FSQQQSFVQL…EGMKVAAESV (193 aa)) are a coiled coil. Residues 293-483 (RVPSDSSLGT…YTEFDEDFEE (191 aa)) form an interaction with CDC42 region. Residues 293-547 (RVPSDSSLGT…PTSYLRVTLN (255 aa)) are interaction with PDE6G. The disordered stretch occupies residues 294-323 (VPSDSSLGTPDGRPELRAASSRSRAKRWPF). Phosphoserine occurs at positions 296, 298, and 299. Residues 332-425 (TEDFSHLPPE…ESRVLSNRGD (94 aa)) are a coiled coil. The REM-1 domain occupies 337-414 (HLPPEQQRKR…VQKYEAWLAE (78 aa)). The required for interaction with FASLG and localization to lysosomes stretch occupies residues 415-547 (AESRVLSNRG…PTSYLRVTLN (133 aa)). A disordered region spans residues 420-485 (LSNRGDSLSR…EFDEDFEEPA (66 aa)). Serine 426 carries the post-translational modification Phosphoserine. The tract at residues 431–487 (TRPPDPPTTAPPDSSSSSNNSGSQDNKESSEEPPSEEGQDTPIYTEFDEDFEEPASP) is interaction with DNM2 and WASL. Positions 441–451 (PPDSSSSSNNS) are enriched in low complexity. The interval 476–547 (EFDEDFEEPA…PTSYLRVTLN (72 aa)) is interaction with DNM1 and WASL. Positions 484–547 (PASPIGQCVA…PTSYLRVTLN (64 aa)) are required for podosome formation. Positions 486–547 (SPIGQCVAIY…PTSYLRVTLN (62 aa)) constitute an SH3 domain. An interaction with WAS region spans residues 490-547 (QCVAIYHFEGSSEGTVSMSEGEDLSLMEEDKGDGWTRVRRKQGGEGYVPTSYLRVTLN). Residues 492-547 (VAIYHFEGSSEGTVSMSEGEDLSLMEEDKGDGWTRVRRKQGGEGYVPTSYLRVTLN) are interaction with ARHGAP17, DAAM1, DIAPH1 and DIAPH2.

Belongs to the FNBP1 family. In terms of assembly, homodimerizes, the dimers can polymerize end-to-end to form filamentous structures. Interacts specifically with GTP-bound CDC42 and RHOQ. Interacts with AKAP9, ARHGAP17, DAAM1, DIAPH1, DIAPH2, DNM1, DNM2, FASLG/FASL, GAPVD1, LYN, microtubules, SRC, WAS/WASP and WASL/N-WASP. Interacts with the ligand binding domain of the thyroid receptor (TR) in the presence of thyroid hormone. May interact with CTNNB1 and HD/HTT. Interacts with PDE6G. As to expression, expressed in adrenal gland, aorta, brain, heart, kidney, liver, skeletal muscle and spleen.

The protein resides in the cytoplasm. It localises to the cytoskeleton. Its subcellular location is the cell cortex. It is found in the lysosome. The protein localises to the golgi apparatus. The protein resides in the cell membrane. It localises to the cell projection. Its subcellular location is the phagocytic cup. In terms of biological role, required to coordinate membrane tubulation with reorganization of the actin cytoskeleton during endocytosis. Also acts as a link between CDC42 signaling and regulation of the actin cytoskeleton. Binds to lipids such as phosphatidylinositol 4,5-bisphosphate and phosphatidylserine and promotes membrane invagination and the formation of tubules. Also enhances actin polymerization in the vicinity of membrane tubules by recruiting WASL/N-WASP which in turn activates the Arp2/3 complex. Actin polymerization and dynamin may promote the fission of membrane tubules to form endocytic vesicles. Required for the formation of podosomes, actin-rich adhesion structures specific to monocyte-derived cells. Required for translocation of GLUT4 to the plasma membrane in response to insulin signaling. May be required for the lysosomal retention of FASLG/FASL. The chain is Cdc42-interacting protein 4 (Trip10) from Rattus norvegicus (Rat).